Reading from the N-terminus, the 331-residue chain is Ketol-acid reductoisomerase (NADP(+)) (331 aa).

The 181-residue stretch at 3-183 folds into the KARI N-terminal Rossmann domain; that stretch reads AQMYYDDDAD…GGTRAGALKT (181 aa). NADP(+)-binding positions include 26–29, Ser-52, and Ser-54; that span reads YGSQ. The active site involves His-109. Residue Gly-135 participates in NADP(+) binding. The KARI C-terminal knotted domain occupies 184–329; it reads TFKEETETDL…TELRSLMSWL (146 aa). Asp-192, Glu-196, Glu-228, and Glu-232 together coordinate Mg(2+). Ser-253 provides a ligand contact to substrate.

It belongs to the ketol-acid reductoisomerase family. The cofactor is Mg(2+).

The enzyme catalyses (2R)-2,3-dihydroxy-3-methylbutanoate + NADP(+) = (2S)-2-acetolactate + NADPH + H(+). It carries out the reaction (2R,3R)-2,3-dihydroxy-3-methylpentanoate + NADP(+) = (S)-2-ethyl-2-hydroxy-3-oxobutanoate + NADPH + H(+). It participates in amino-acid biosynthesis; L-isoleucine biosynthesis; L-isoleucine from 2-oxobutanoate: step 2/4. It functions in the pathway amino-acid biosynthesis; L-valine biosynthesis; L-valine from pyruvate: step 2/4. In terms of biological role, involved in the biosynthesis of branched-chain amino acids (BCAA). Catalyzes an alkyl-migration followed by a ketol-acid reduction of (S)-2-acetolactate (S2AL) to yield (R)-2,3-dihydroxy-isovalerate. In the isomerase reaction, S2AL is rearranged via a Mg-dependent methyl migration to produce 3-hydroxy-3-methyl-2-ketobutyrate (HMKB). In the reductase reaction, this 2-ketoacid undergoes a metal-dependent reduction by NADPH to yield (R)-2,3-dihydroxy-isovalerate. The protein is Ketol-acid reductoisomerase (NADP(+)) of Thermobifida fusca (strain YX).